Reading from the N-terminus, the 207-residue chain is Large ribosomal subunit protein uL4 (207 aa).

Positions 58–78 are disordered; that stretch reads AGGGKKPWRQKGTGRARHGSI. Residues 63-77 are compositionally biased toward basic residues; that stretch reads KPWRQKGTGRARHGS.

Belongs to the universal ribosomal protein uL4 family. As to quaternary structure, part of the 50S ribosomal subunit.

One of the primary rRNA binding proteins, this protein initially binds near the 5'-end of the 23S rRNA. It is important during the early stages of 50S assembly. It makes multiple contacts with different domains of the 23S rRNA in the assembled 50S subunit and ribosome. In terms of biological role, forms part of the polypeptide exit tunnel. This Aster yellows witches'-broom phytoplasma (strain AYWB) protein is Large ribosomal subunit protein uL4.